Consider the following 63-residue polypeptide: uncharacterized protein (63 aa).

This is an uncharacterized protein from Escherichia coli (strain K12).